The sequence spans 245 residues: tRNA1(Val) (adenine(37)-N6)-methyltransferase (245 aa).

This sequence belongs to the methyltransferase superfamily. tRNA (adenine-N(6)-)-methyltransferase family.

The protein localises to the cytoplasm. The enzyme catalyses adenosine(37) in tRNA1(Val) + S-adenosyl-L-methionine = N(6)-methyladenosine(37) in tRNA1(Val) + S-adenosyl-L-homocysteine + H(+). Functionally, specifically methylates the adenine in position 37 of tRNA(1)(Val) (anticodon cmo5UAC). This is tRNA1(Val) (adenine(37)-N6)-methyltransferase from Escherichia fergusonii (strain ATCC 35469 / DSM 13698 / CCUG 18766 / IAM 14443 / JCM 21226 / LMG 7866 / NBRC 102419 / NCTC 12128 / CDC 0568-73).